The following is a 911-amino-acid chain: Protein translocase subunit SecA (911 aa).

Residues glutamine 87, 105–109 (GEGKT), and aspartate 512 each bind ATP. Residues 561 to 571 (RHESRRIDNQL) show a composition bias toward basic and acidic residues. Positions 561–583 (RHESRRIDNQLRGRSGRQGDPGS) are disordered. Zn(2+)-binding residues include cysteine 895, cysteine 897, cysteine 906, and histidine 907.

The protein belongs to the SecA family. In terms of assembly, monomer and homodimer. Part of the essential Sec protein translocation apparatus which comprises SecA, SecYEG and auxiliary proteins SecDF-YajC and YidC. It depends on Zn(2+) as a cofactor.

The protein resides in the cell inner membrane. It is found in the cytoplasm. The enzyme catalyses ATP + H2O + cellular proteinSide 1 = ADP + phosphate + cellular proteinSide 2.. Functionally, part of the Sec protein translocase complex. Interacts with the SecYEG preprotein conducting channel. Has a central role in coupling the hydrolysis of ATP to the transfer of proteins into and across the cell membrane, serving both as a receptor for the preprotein-SecB complex and as an ATP-driven molecular motor driving the stepwise translocation of polypeptide chains across the membrane. The chain is Protein translocase subunit SecA from Pseudomonas putida (strain W619).